Here is a 39-residue protein sequence, read N- to C-terminus: Photosystem II reaction center protein Psb30 (39 aa).

A helical transmembrane segment spans residues 12-32; the sequence is IFQLTFVGLIVIAGPIVIAVL.

The protein belongs to the Psb30/Ycf12 family. In terms of assembly, PSII is composed of 1 copy each of membrane proteins PsbA, PsbB, PsbC, PsbD, PsbE, PsbF, PsbH, PsbI, PsbJ, PsbK, PsbL, PsbM, PsbT, PsbX, PsbY, PsbZ, Psb30/Ycf12, peripheral proteins PsbO, CyanoQ (PsbQ), PsbU, PsbV and a large number of cofactors. It forms dimeric complexes.

It is found in the cellular thylakoid membrane. A core subunit of photosystem II (PSII), probably helps stabilize the reaction center. The polypeptide is Photosystem II reaction center protein Psb30 (Crocosphaera subtropica (strain ATCC 51142 / BH68) (Cyanothece sp. (strain ATCC 51142))).